Reading from the N-terminus, the 352-residue chain is Ni-sirohydrochlorin a,c-diamide reductive cyclase complex, component CfbD (352 aa).

The protein belongs to the NifD/NifK/NifE/NifN family. Homodimer or monomer. The Ni-sirohydrochlorin a,c-diamide reductive cyclase complex is composed of a NifH homolog component CfbC and a NifD homolog component CfbD. The cofactor is [4Fe-4S] cluster.

The enzyme catalyses Ni-sirohydrochlorin a,c-diamide + 3 AH2 + ATP + H2O = 15,17(3)-seco-F430-17(3)-acid + 3 A + ADP + phosphate. Functionally, involved in the biosynthesis of the unique nickel-containing tetrapyrrole coenzyme F430, the prosthetic group of methyl-coenzyme M reductase (MCR), which plays a key role in methanogenesis and anaerobic methane oxidation. Catalyzes both the six-electron reduction of the tetrahydroporphyrin ring system and the gamma-lactamization of the c-acetamide side chain of Ni-sirohydrochlorin a,c-diamide to yield 15,17(3)-seco-F430-17(3)-acid (seco-F430), the last intermediate in the biosynthesis of the coenzyme F430. The sequence is that of Ni-sirohydrochlorin a,c-diamide reductive cyclase complex, component CfbD from Methanocaldococcus jannaschii (strain ATCC 43067 / DSM 2661 / JAL-1 / JCM 10045 / NBRC 100440) (Methanococcus jannaschii).